Consider the following 68-residue polypeptide: DNA-directed RNA polymerase subunit omega (68 aa).

It belongs to the RNA polymerase subunit omega family. The RNAP catalytic core consists of 2 alpha, 1 beta, 1 beta' and 1 omega subunit. When a sigma factor is associated with the core the holoenzyme is formed, which can initiate transcription.

The enzyme catalyses RNA(n) + a ribonucleoside 5'-triphosphate = RNA(n+1) + diphosphate. Its function is as follows. Promotes RNA polymerase assembly. Latches the N- and C-terminal regions of the beta' subunit thereby facilitating its interaction with the beta and alpha subunits. This chain is DNA-directed RNA polymerase subunit omega, found in Desulfitobacterium hafniense (strain DSM 10664 / DCB-2).